The following is a 205-amino-acid chain: Probable GTP-binding protein EngB (205 aa).

Residues glutamine 29–serine 203 form the EngB-type G domain. GTP is bound by residues glycine 37–serine 44, glycine 64–methionine 68, aspartate 82–glycine 85, threonine 149–aspartate 152, and phenylalanine 182–serine 184. Residues serine 44 and threonine 66 each contribute to the Mg(2+) site.

It belongs to the TRAFAC class TrmE-Era-EngA-EngB-Septin-like GTPase superfamily. EngB GTPase family. Mg(2+) serves as cofactor.

Its function is as follows. Necessary for normal cell division and for the maintenance of normal septation. The chain is Probable GTP-binding protein EngB from Coxiella burnetii (strain RSA 331 / Henzerling II).